The primary structure comprises 776 residues: General transcription and DNA repair factor IIH helicase subunit XPD (776 aa).

The 271-residue stretch at 7-277 folds into the Helicase ATP-binding domain; that stretch reads DLLVYFPYSY…KKVDEKRLKD (271 aa). 42 to 49 contributes to the ATP binding site; it reads MPSGTGKT. Residues Cys115, Cys133, Cys150, and Cys184 each contribute to the [4Fe-4S] cluster site. Positions 228–231 match the DEAH box motif; that stretch reads DEAH. The tract at residues 736–776 is disordered; it reads HVEKQSTSKPPQQQNSAINSTITTSTTTTTTTSTISETHLT. Polar residues predominate over residues 742-754; sequence TSKPPQQQNSAIN. The span at 755–776 shows a compositional bias: low complexity; it reads STITTSTTTTTTTSTISETHLT.

It belongs to the helicase family. RAD3/XPD subfamily. In terms of assembly, component of the 7-subunit TFIIH core complex composed of XPB/repB, XPD/repD, gtf2h1, gtf2h2, gtf2h3, gtf2h4 and gtf2h5, which is active in NER. The core complex associates with the 3-subunit CDK-activating kinase (CAK) module composed of cycH/cyclin H, cdk7 and mnat1 to form the 10-subunit holoenzyme (holo-TFIIH) active in transcription. Requires Mg(2+) as cofactor. It depends on [4Fe-4S] cluster as a cofactor.

The protein resides in the nucleus. The enzyme catalyses Couples ATP hydrolysis with the unwinding of duplex DNA at the replication fork by translocating in the 5'-3' direction. This creates two antiparallel DNA single strands (ssDNA). The leading ssDNA polymer is the template for DNA polymerase III holoenzyme which synthesizes a continuous strand.. The catalysed reaction is ATP + H2O = ADP + phosphate + H(+). Its function is as follows. ATP-dependent 5'-3' DNA helicase, component of the general transcription and DNA repair factor IIH (TFIIH) core complex, which is involved in general and transcription-coupled nucleotide excision repair (NER) of damaged DNA and, when complexed to CDK-activating kinase (CAK), in transcription by RNA polymerase II. In NER, TFIIH acts by opening DNA around the lesion to allow the excision of the damaged oligonucleotide and its replacement by a new DNA fragment. The ATP-dependent helicase activity of XPD/repD is required for DNA opening. In transcription, TFIIH has an essential role in transcription initiation. When the pre-initiation complex (PIC) has been established, TFIIH is required for promoter opening and promoter escape. Phosphorylation of the C-terminal tail (CTD) of the largest subunit of RNA polymerase II by the kinase module CAK controls the initiation of transcription. XPD/repD acts by forming a bridge between CAK and the core-TFIIH complex. The protein is General transcription and DNA repair factor IIH helicase subunit XPD of Dictyostelium discoideum (Social amoeba).